We begin with the raw amino-acid sequence, 171 residues long: Large ribosomal subunit protein bL9 (171 aa).

It belongs to the bacterial ribosomal protein bL9 family.

Its function is as follows. Binds to the 23S rRNA. This is Large ribosomal subunit protein bL9 from Rickettsia prowazekii (strain Madrid E).